A 340-amino-acid polypeptide reads, in one-letter code: MTLTVAVDAMGGDVGVGVTVPAAVDFLDRHPDVRLILVGQPDAIEDELTRLARPRSGRLTVHAASQVVAMDDSPQSALKNKKDSSMRVAINLVKEGQAQAAVSAGNTGALMATARFVLKTIPGIDRPAIAKLLPTMKGESCVLDLGANVDCTPEQLLQFGIMGATLIEGVTGRNNPTVGLLNIGSEEIKGNDTVKQAAELLRNSSLNFYGNVEGNDIYLGTVDVIVTDGFTGNVALKTSEGLAHMVGALLKQEFGRNLFTRLSALAALPVLKHFKKRLDSPALQWRQSGRPARHRGQEPRRHRQPRFWLCHRRGRRRSPRQRNRTHPGTGQPPAGCAGAR.

Residues 285 to 340 (WRQSGRPARHRGQEPRRHRQPRFWLCHRRGRRRSPRQRNRTHPGTGQPPAGCAGAR) are disordered. Basic residues predominate over residues 300–325 (RRHRQPRFWLCHRRGRRRSPRQRNRT).

The protein belongs to the PlsX family. As to quaternary structure, homodimer. Probably interacts with PlsY.

It is found in the cytoplasm. It catalyses the reaction a fatty acyl-[ACP] + phosphate = an acyl phosphate + holo-[ACP]. It participates in lipid metabolism; phospholipid metabolism. Its function is as follows. Catalyzes the reversible formation of acyl-phosphate (acyl-PO(4)) from acyl-[acyl-carrier-protein] (acyl-ACP). This enzyme utilizes acyl-ACP as fatty acyl donor, but not acyl-CoA. The chain is Phosphate acyltransferase from Laribacter hongkongensis (strain HLHK9).